Here is a 265-residue protein sequence, read N- to C-terminus: Tryptophan synthase alpha chain (265 aa).

Catalysis depends on proton acceptor residues Glu-49 and Asp-60.

Belongs to the TrpA family. In terms of assembly, tetramer of two alpha and two beta chains.

The catalysed reaction is (1S,2R)-1-C-(indol-3-yl)glycerol 3-phosphate + L-serine = D-glyceraldehyde 3-phosphate + L-tryptophan + H2O. The protein operates within amino-acid biosynthesis; L-tryptophan biosynthesis; L-tryptophan from chorismate: step 5/5. The alpha subunit is responsible for the aldol cleavage of indoleglycerol phosphate to indole and glyceraldehyde 3-phosphate. The polypeptide is Tryptophan synthase alpha chain (Ralstonia nicotianae (strain ATCC BAA-1114 / GMI1000) (Ralstonia solanacearum)).